The chain runs to 225 residues: Glutathione S-transferase-like protein tpcF (225 aa).

One can recognise a GST N-terminal domain in the interval 4 to 85 (IQPITVYGKG…YLVSHYDPDH (82 aa)). In terms of domain architecture, GST C-terminal spans 92-225 (GSNLAALATQ…KGMADIFPST (134 aa)).

The protein belongs to the GST superfamily. As to expression, specifically expressed in conidia.

Its pathway is secondary metabolite biosynthesis. Its function is as follows. Glutathione S-transferase-like protein; part of the gene cluster that mediates the biosynthesis of trypacidin, a mycotoxin with antiprotozoal activity and that plays a role in the infection process. The pathway begins with the synthesis of atrochrysone thioester by the polyketide synthase (PKS) tpcC. The atrochrysone carboxyl ACP thioesterase tpcB then breaks the thioester bond and releases the atrochrysone carboxylic acid from tpcC. The decarboxylase tpcK converts atrochrysone carboxylic acid to atrochrysone which is further reduced into emodin anthrone. The next step is performed by the emodin anthrone oxygenase tpcL that catalyzes the oxidation of emodinanthrone to emodin. Emodin O-methyltransferase encoded by tpcA catalyzes methylation of the 8-hydroxy group of emodin to form questin. Ring cleavage of questin by questin oxidase tpcI leads to desmethylsulochrin via several intermediates including questin epoxide. Another methylation step catalyzed by tpcM leads to the formation of sulochrin which is further converted to monomethylsulfochrin by tpcH. Finally, the tpcJ catalyzes the conversion of monomethylsulfochrin to trypacidin. Trypacidin is toxic for human pulmonary and bronchial epithelial cells by initiating the intracellular formation of nitric oxide (NO) and hydrogen peroxide (H(2)O(2)), thus triggering host necrotic cell death. The trypacidin pathway is also able to produce endocrocin via a distinct route from the endocrocin Enc pathway. This Aspergillus fumigatus (strain ATCC MYA-4609 / CBS 101355 / FGSC A1100 / Af293) (Neosartorya fumigata) protein is Glutathione S-transferase-like protein tpcF.